The primary structure comprises 186 residues: ATP synthase subunit b' (186 aa).

A helical membrane pass occupies residues 39 to 59; it reads IFWLLLALGAIYWLLKNIAIP.

Belongs to the ATPase B chain family. F-type ATPases have 2 components, F(1) - the catalytic core - and F(0) - the membrane proton channel. F(1) has five subunits: alpha(3), beta(3), gamma(1), delta(1), epsilon(1). F(0) has four main subunits: a(1), b(1), b'(1) and c(10-14). The alpha and beta chains form an alternating ring which encloses part of the gamma chain. F(1) is attached to F(0) by a central stalk formed by the gamma and epsilon chains, while a peripheral stalk is formed by the delta, b and b' chains.

The protein resides in the cellular chromatophore membrane. In terms of biological role, f(1)F(0) ATP synthase produces ATP from ADP in the presence of a proton or sodium gradient. F-type ATPases consist of two structural domains, F(1) containing the extramembraneous catalytic core and F(0) containing the membrane proton channel, linked together by a central stalk and a peripheral stalk. During catalysis, ATP synthesis in the catalytic domain of F(1) is coupled via a rotary mechanism of the central stalk subunits to proton translocation. Functionally, component of the F(0) channel, it forms part of the peripheral stalk, linking F(1) to F(0). The b'-subunit is a diverged and duplicated form of b found in plants and photosynthetic bacteria. The protein is ATP synthase subunit b' of Rhodobacter capsulatus (Rhodopseudomonas capsulata).